Here is a 644-residue protein sequence, read N- to C-terminus: Putative aldehyde dehydrogenase-like protein YHR039C (644 aa).

N-linked (GlcNAc...) asparagine glycosylation is present at N15. E354 (proton acceptor) is an active-site residue. C389 (nucleophile) is an active-site residue. Residues N565 and N627 are each glycosylated (N-linked (GlcNAc...) asparagine).

The protein belongs to the aldehyde dehydrogenase family. In terms of processing, N-glycosylated.

The protein resides in the endoplasmic reticulum. The chain is Putative aldehyde dehydrogenase-like protein YHR039C (MSC7) from Saccharomyces cerevisiae (strain ATCC 204508 / S288c) (Baker's yeast).